Reading from the N-terminus, the 412-residue chain is Mast cell carboxypeptidase A (412 aa).

A signal peptide spans 1-10 (LMGVIYSTLA). Positions 11–104 (IAPVQFDREK…IDKQFDVKEE (94 aa)) are cleaved as a propeptide — activation peptide. The Peptidase M14 domain occupies 113–407 (KYNDWNKIVS…LSVKFIAKYI (295 aa)). Disulfide bonds link C168/C181 and C240/C263. Positions 171 and 174 each coordinate Zn(2+). Residue H299 coordinates Zn(2+). The active-site Proton donor/acceptor is the E373.

Belongs to the peptidase M14 family. Zn(2+) serves as cofactor.

It localises to the cytoplasmic vesicle. The protein localises to the secretory vesicle. The enzyme catalyses Release of a C-terminal amino acid, but little or no action with -Asp, -Glu, -Arg, -Lys or -Pro.. The polypeptide is Mast cell carboxypeptidase A (Cpa3) (Rattus norvegicus (Rat)).